The chain runs to 196 residues: MAASSTLESLTEALRRLPGVGVKSAQRMAYHLLQHDREGALRLARALEQAVATVRHCERCNTFTEAPVCSTCLDPARERRQLCVVETPADQAAVERSGSYHGLYFVLMGRLSPLDGIGVHDIGLEKLLARATDGEVQELIVATNFTAEGEATAHVIAQALKGRGPSVTRLARGVPVGSELEYVDLGTIAHALSDRR.

The C4-type zinc finger occupies 57-72; it reads CERCNTFTEAPVCSTC. Residues 80-175 form the Toprim domain; that stretch reads RQLCVVETPA…SVTRLARGVP (96 aa).

Belongs to the RecR family.

Functionally, may play a role in DNA repair. It seems to be involved in an RecBC-independent recombinational process of DNA repair. It may act with RecF and RecO. This is Recombination protein RecR from Methylibium petroleiphilum (strain ATCC BAA-1232 / LMG 22953 / PM1).